The following is a 286-amino-acid chain: 3-hydroxyanthranilate 3,4-dioxygenase (286 aa).

The domain A (catalytic) stretch occupies residues 1-160 (MERRVRVKSW…SEQYRTGKPN (160 aa)). Arg-43 lines the O2 pocket. Residues His-47, Glu-53, and His-91 each coordinate Fe cation. Glu-53 contacts substrate. Substrate-binding residues include Arg-95 and Glu-105. The linker stretch occupies residues 161–177 (PDQLLKELPFPLNTRSI). The tract at residues 178 to 286 (MKPMSLKAWL…QDPARKKPWW (109 aa)) is domain B.

This sequence belongs to the 3-HAO family. Monomer. Requires Fe(2+) as cofactor.

The protein resides in the cytoplasm. It is found in the cytosol. The catalysed reaction is 3-hydroxyanthranilate + O2 = (2Z,4Z)-2-amino-3-carboxymuconate 6-semialdehyde. It functions in the pathway cofactor biosynthesis; NAD(+) biosynthesis; quinolinate from L-kynurenine: step 3/3. Its function is as follows. Catalyzes the oxidative ring opening of 3-hydroxyanthranilate to 2-amino-3-carboxymuconate semialdehyde, which spontaneously cyclizes to quinolinate. The chain is 3-hydroxyanthranilate 3,4-dioxygenase (Haao) from Mus musculus (Mouse).